A 420-amino-acid chain; its full sequence is Gamma-glutamyl phosphate reductase (420 aa).

The protein belongs to the gamma-glutamyl phosphate reductase family.

Its subcellular location is the cytoplasm. It catalyses the reaction L-glutamate 5-semialdehyde + phosphate + NADP(+) = L-glutamyl 5-phosphate + NADPH + H(+). Its pathway is amino-acid biosynthesis; L-proline biosynthesis; L-glutamate 5-semialdehyde from L-glutamate: step 2/2. Its function is as follows. Catalyzes the NADPH-dependent reduction of L-glutamate 5-phosphate into L-glutamate 5-semialdehyde and phosphate. The product spontaneously undergoes cyclization to form 1-pyrroline-5-carboxylate. The protein is Gamma-glutamyl phosphate reductase of Streptococcus pneumoniae serotype 4 (strain ATCC BAA-334 / TIGR4).